Reading from the N-terminus, the 454-residue chain is Allantoinase (454 aa).

The Zn(2+) site is built by His60, His62, Lys147, His183, His239, and Asp312. N6-carboxylysine is present on Lys147.

Belongs to the metallo-dependent hydrolases superfamily. Allantoinase family. In terms of assembly, homotetramer. Zn(2+) serves as cofactor. In terms of processing, carboxylation allows a single lysine to coordinate two zinc ions.

It catalyses the reaction (S)-allantoin + H2O = allantoate + H(+). The protein operates within nitrogen metabolism; (S)-allantoin degradation; allantoate from (S)-allantoin: step 1/1. In terms of biological role, catalyzes the conversion of allantoin (5-ureidohydantoin) to allantoic acid by hydrolytic cleavage of the five-member hydantoin ring. This is Allantoinase from Rubrobacter xylanophilus (strain DSM 9941 / JCM 11954 / NBRC 16129 / PRD-1).